Here is a 288-residue protein sequence, read N- to C-terminus: Diaminopimelate epimerase (288 aa).

Positions 17, 47, and 67 each coordinate substrate. Cysteine 76 functions as the Proton donor in the catalytic mechanism. Residues 77–78 (GN), asparagine 164, asparagine 197, and 215–216 (ER) each bind substrate. The active-site Proton acceptor is the cysteine 224. 225–226 (GS) serves as a coordination point for substrate.

This sequence belongs to the diaminopimelate epimerase family. As to quaternary structure, homodimer.

It localises to the cytoplasm. It catalyses the reaction (2S,6S)-2,6-diaminopimelate = meso-2,6-diaminopimelate. The protein operates within amino-acid biosynthesis; L-lysine biosynthesis via DAP pathway; DL-2,6-diaminopimelate from LL-2,6-diaminopimelate: step 1/1. Its function is as follows. Catalyzes the stereoinversion of LL-2,6-diaminopimelate (L,L-DAP) to meso-diaminopimelate (meso-DAP), a precursor of L-lysine and an essential component of the bacterial peptidoglycan. The chain is Diaminopimelate epimerase from Rhodopseudomonas palustris (strain BisA53).